The following is a 473-amino-acid chain: Photosystem II CP43 reaction center protein (473 aa).

Positions 1-14 are excised as a propeptide; the sequence is MKTLYSLRRFYHVE. An N-acetylthreonine modification is found at Thr15. Thr15 carries the phosphothreonine modification. Helical transmembrane passes span 69 to 93, 134 to 155, 178 to 200, 255 to 275, and 291 to 312; these read LFEV…PHLA, LLGP…KDRN, KAFY…RKIT, KPFA…LSYS, and WFNN…ASQA. Residue Glu367 coordinates [CaMn4O5] cluster. Residues 447 to 471 traverse the membrane as a helical segment; sequence RARAAAAGFEKGIDRDFEPVLSMTP.

This sequence belongs to the PsbB/PsbC family. PsbC subfamily. PSII is composed of 1 copy each of membrane proteins PsbA, PsbB, PsbC, PsbD, PsbE, PsbF, PsbH, PsbI, PsbJ, PsbK, PsbL, PsbM, PsbT, PsbX, PsbY, PsbZ, Psb30/Ycf12, at least 3 peripheral proteins of the oxygen-evolving complex and a large number of cofactors. It forms dimeric complexes. Binds multiple chlorophylls and provides some of the ligands for the Ca-4Mn-5O cluster of the oxygen-evolving complex. It may also provide a ligand for a Cl- that is required for oxygen evolution. PSII binds additional chlorophylls, carotenoids and specific lipids. is required as a cofactor.

It localises to the plastid. It is found in the chloroplast thylakoid membrane. Functionally, one of the components of the core complex of photosystem II (PSII). It binds chlorophyll and helps catalyze the primary light-induced photochemical processes of PSII. PSII is a light-driven water:plastoquinone oxidoreductase, using light energy to abstract electrons from H(2)O, generating O(2) and a proton gradient subsequently used for ATP formation. This is Photosystem II CP43 reaction center protein from Pisum sativum (Garden pea).